We begin with the raw amino-acid sequence, 288 residues long: Quinate/shikimate dehydrogenase (288 aa).

Substrate-binding residues include Lys-71 and Asp-107. NAD(+) is bound by residues 132-135, 155-158, Lys-205, 232-235, and Gly-255; these read AGGA, NRRD, and CVYN.

It belongs to the shikimate dehydrogenase family. Homodimer.

It carries out the reaction L-quinate + NAD(+) = 3-dehydroquinate + NADH + H(+). The enzyme catalyses L-quinate + NADP(+) = 3-dehydroquinate + NADPH + H(+). It catalyses the reaction shikimate + NADP(+) = 3-dehydroshikimate + NADPH + H(+). The catalysed reaction is shikimate + NAD(+) = 3-dehydroshikimate + NADH + H(+). Its pathway is metabolic intermediate biosynthesis; chorismate biosynthesis; chorismate from D-erythrose 4-phosphate and phosphoenolpyruvate: step 4/7. Functionally, the actual biological function of YdiB remains unclear, nor is it known whether 3-dehydroshikimate or quinate represents the natural substrate. Catalyzes the reversible NAD-dependent reduction of both 3-dehydroshikimate (DHSA) and 3-dehydroquinate to yield shikimate (SA) and quinate, respectively. It can use both NAD or NADP for catalysis, however it has higher catalytic efficiency with NAD. This is Quinate/shikimate dehydrogenase from Escherichia coli O157:H7.